Consider the following 515-residue polypeptide: 2-isopropylmalate synthase (515 aa).

In terms of domain architecture, Pyruvate carboxyltransferase spans 4–264 (VKIFDTTLRD…NIGINQDTTQ (261 aa)). Residues Asp13, His201, His203, and Asn237 each coordinate Mn(2+). Residues 390–515 (ELDYLSVNTG…RQTTSAQEGI (126 aa)) form a regulatory domain region.

Belongs to the alpha-IPM synthase/homocitrate synthase family. LeuA type 1 subfamily. Homodimer. Requires Mn(2+) as cofactor.

It is found in the cytoplasm. The catalysed reaction is 3-methyl-2-oxobutanoate + acetyl-CoA + H2O = (2S)-2-isopropylmalate + CoA + H(+). Its pathway is amino-acid biosynthesis; L-leucine biosynthesis; L-leucine from 3-methyl-2-oxobutanoate: step 1/4. Its function is as follows. Catalyzes the condensation of the acetyl group of acetyl-CoA with 3-methyl-2-oxobutanoate (2-ketoisovalerate) to form 3-carboxy-3-hydroxy-4-methylpentanoate (2-isopropylmalate). This Halothermothrix orenii (strain H 168 / OCM 544 / DSM 9562) protein is 2-isopropylmalate synthase.